The following is a 224-amino-acid chain: MSISDWPEAERPREKLLKNGPAYLSDAELLAIFLRTGIAGKSAVDLARELLKRFRGLTGLFAADQGAFCQVPGMGPAKFAQLQAVLEMARRALEEELKSSDAMDSPGPVRAFLRLSLEGKEHEVFVSIFLDARNRVIATEELFQGTLTQTSVYPREVVKRALHHNAAAVIFAHNHPSGAAEPSHADAVLTQSLKQALLLVDVRVLDHFIVGRGATLSFAEQGLI.

An MPN domain is found at 102–224 (AMDSPGPVRA…TLSFAEQGLI (123 aa)). Residues His173, His175, and Asp186 each contribute to the Zn(2+) site. Positions 173-186 (HNHPSGAAEPSHAD) match the JAMM motif motif.

Belongs to the UPF0758 family.

The polypeptide is UPF0758 protein Nmul_A2138 (Nitrosospira multiformis (strain ATCC 25196 / NCIMB 11849 / C 71)).